A 295-amino-acid polypeptide reads, in one-letter code: Pyridoxal 5'-phosphate synthase subunit PdxS (295 aa).

Asp25 contributes to the D-ribose 5-phosphate binding site. The active-site Schiff-base intermediate with D-ribose 5-phosphate is Lys82. A D-ribose 5-phosphate-binding site is contributed by Gly154. A D-glyceraldehyde 3-phosphate-binding site is contributed by Arg166. D-ribose 5-phosphate-binding positions include Gly215 and 236-237 (GS).

It belongs to the PdxS/SNZ family. In the presence of PdxT, forms a dodecamer of heterodimers.

The catalysed reaction is aldehydo-D-ribose 5-phosphate + D-glyceraldehyde 3-phosphate + L-glutamine = pyridoxal 5'-phosphate + L-glutamate + phosphate + 3 H2O + H(+). The protein operates within cofactor biosynthesis; pyridoxal 5'-phosphate biosynthesis. Functionally, catalyzes the formation of pyridoxal 5'-phosphate from ribose 5-phosphate (RBP), glyceraldehyde 3-phosphate (G3P) and ammonia. The ammonia is provided by the PdxT subunit. Can also use ribulose 5-phosphate and dihydroxyacetone phosphate as substrates, resulting from enzyme-catalyzed isomerization of RBP and G3P, respectively. The chain is Pyridoxal 5'-phosphate synthase subunit PdxS from Staphylococcus haemolyticus (strain JCSC1435).